The sequence spans 77 residues: Defensin-like protein 4 (77 aa).

The first 30 residues, 1–30, serve as a signal peptide directing secretion; sequence MKFSMRLISAVLFLVMIFVATGMGPVTVEA. Intrachain disulfides connect C33–C77, C44–C64, C50–C71, and C54–C73.

The protein belongs to the DEFL family. As to expression, expressed in roots, siliques and seeds.

It localises to the secreted. Its function is as follows. Confers broad-spectrum resistance to pathogens. The sequence is that of Defensin-like protein 4 (PDF2.1) from Arabidopsis thaliana (Mouse-ear cress).